Consider the following 650-residue polypeptide: Macrolide export ATP-binding/permease protein MacB (650 aa).

Positions 6–244 constitute an ABC transporter domain; the sequence is LKLTGITRRF…ASSPEAASSP (239 aa). 42 to 49 provides a ligand contact to ATP; sequence GASGSGKS. Positions 227–246 are disordered; sequence QTRPEEATASSPEAASSPAT. Residues 233–246 show a composition bias toward low complexity; sequence ATASSPEAASSPAT. A run of 4 helical transmembrane segments spans residues 275–295, 523–543, 580–600, and 615–635; these read FLTM…VALG, LTLL…IGVM, LVCL…GVLF, and SIIA…FFPA.

It belongs to the ABC transporter superfamily. Macrolide exporter (TC 3.A.1.122) family. As to quaternary structure, homodimer. Part of the tripartite efflux system MacAB-TolC, which is composed of an inner membrane transporter, MacB, a periplasmic membrane fusion protein, MacA, and an outer membrane component, TolC. The complex forms a large protein conduit and can translocate molecules across both the inner and outer membranes. Interacts with MacA.

It localises to the cell inner membrane. Functionally, part of the tripartite efflux system MacAB-TolC. MacB is a non-canonical ABC transporter that contains transmembrane domains (TMD), which form a pore in the inner membrane, and an ATP-binding domain (NBD), which is responsible for energy generation. Confers resistance against macrolides. In Pectobacterium atrosepticum (strain SCRI 1043 / ATCC BAA-672) (Erwinia carotovora subsp. atroseptica), this protein is Macrolide export ATP-binding/permease protein MacB.